A 506-amino-acid chain; its full sequence is RNA-splicing ligase RtcB homolog (506 aa).

Residues Asp120, Cys123, His228, His260, and His354 each coordinate Mn(2+). Residue 227–231 participates in GMP binding; that stretch reads NHYAE. GMP-binding positions include 354 to 355, 403 to 406, Ser410, 429 to 432, and Lys505; these read HN, GGTM, and HGAG. Residue His429 is the GMP-histidine intermediate of the active site.

It belongs to the RtcB family. Catalytic component of the tRNA-splicing ligase complex. The cofactor is Mn(2+).

The enzyme catalyses a 3'-end 3'-phospho-ribonucleotide-RNA + a 5'-end dephospho-ribonucleoside-RNA + GTP = a ribonucleotidyl-ribonucleotide-RNA + GMP + diphosphate. The catalysed reaction is a 3'-end 2',3'-cyclophospho-ribonucleotide-RNA + a 5'-end dephospho-ribonucleoside-RNA + GTP + H2O = a ribonucleotidyl-ribonucleotide-RNA + GMP + diphosphate + H(+). In terms of biological role, catalytic subunit of the tRNA-splicing ligase complex that acts by directly joining spliced tRNA halves to mature-sized tRNAs by incorporating the precursor-derived splice junction phosphate into the mature tRNA as a canonical 3',5'-phosphodiester. May act as an RNA ligase with broad substrate specificity, and may function toward other RNAs. This chain is RNA-splicing ligase RtcB homolog, found in Drosophila melanogaster (Fruit fly).